Reading from the N-terminus, the 695-residue chain is Elongation factor G 1 (695 aa).

Residues 5–280 form the tr-type G domain; sequence ARYRNIGIFA…AVVDYLPSPT (276 aa). GTP contacts are provided by residues 14 to 21, 78 to 82, and 132 to 135; these read AHVDAGKT, DTPGH, and NKLD.

It belongs to the TRAFAC class translation factor GTPase superfamily. Classic translation factor GTPase family. EF-G/EF-2 subfamily.

The protein resides in the cytoplasm. Its function is as follows. Catalyzes the GTP-dependent ribosomal translocation step during translation elongation. During this step, the ribosome changes from the pre-translocational (PRE) to the post-translocational (POST) state as the newly formed A-site-bound peptidyl-tRNA and P-site-bound deacylated tRNA move to the P and E sites, respectively. Catalyzes the coordinated movement of the two tRNA molecules, the mRNA and conformational changes in the ribosome. In Pseudoalteromonas atlantica (strain T6c / ATCC BAA-1087), this protein is Elongation factor G 1.